We begin with the raw amino-acid sequence, 267 residues long: 4-hydroxy-tetrahydrodipicolinate reductase (267 aa).

10–15 is an NAD(+) binding site; that stretch reads GAGGKM. Arg38 contacts NADP(+). NAD(+)-binding positions include 100 to 102 and 126 to 129; these read GTT and APNF. The active-site Proton donor/acceptor is His156. His157 contributes to the (S)-2,3,4,5-tetrahydrodipicolinate binding site. Lys160 acts as the Proton donor in catalysis. A (S)-2,3,4,5-tetrahydrodipicolinate-binding site is contributed by 166–167; that stretch reads GT.

It belongs to the DapB family.

The protein resides in the cytoplasm. It catalyses the reaction (S)-2,3,4,5-tetrahydrodipicolinate + NAD(+) + H2O = (2S,4S)-4-hydroxy-2,3,4,5-tetrahydrodipicolinate + NADH + H(+). The catalysed reaction is (S)-2,3,4,5-tetrahydrodipicolinate + NADP(+) + H2O = (2S,4S)-4-hydroxy-2,3,4,5-tetrahydrodipicolinate + NADPH + H(+). Its pathway is amino-acid biosynthesis; L-lysine biosynthesis via DAP pathway; (S)-tetrahydrodipicolinate from L-aspartate: step 4/4. In terms of biological role, catalyzes the conversion of 4-hydroxy-tetrahydrodipicolinate (HTPA) to tetrahydrodipicolinate. In Desulfitobacterium hafniense (strain DSM 10664 / DCB-2), this protein is 4-hydroxy-tetrahydrodipicolinate reductase.